The primary structure comprises 102 residues: Large ribosomal subunit protein bL21 (102 aa).

Belongs to the bacterial ribosomal protein bL21 family. In terms of assembly, part of the 50S ribosomal subunit. Contacts protein L20.

Its function is as follows. This protein binds to 23S rRNA in the presence of protein L20. This is Large ribosomal subunit protein bL21 from Leptospira biflexa serovar Patoc (strain Patoc 1 / Ames).